The sequence spans 314 residues: Ribosomal protein L11 methyltransferase (314 aa).

S-adenosyl-L-methionine is bound by residues Thr161, Gly182, Asp204, and Asn248.

Belongs to the methyltransferase superfamily. PrmA family.

The protein resides in the cytoplasm. It catalyses the reaction L-lysyl-[protein] + 3 S-adenosyl-L-methionine = N(6),N(6),N(6)-trimethyl-L-lysyl-[protein] + 3 S-adenosyl-L-homocysteine + 3 H(+). In terms of biological role, methylates ribosomal protein L11. This is Ribosomal protein L11 methyltransferase from Listeria monocytogenes serotype 1/2a (strain 10403S).